Here is a 403-residue protein sequence, read N- to C-terminus: UPF0229 protein CKR_0568 (403 aa).

The interval 71-109 is disordered; it reads SSGVGSGDGSQKKGDRIGKAIKDRDGKGNQGAGNQEGED. A compositionally biased stretch (basic and acidic residues) spans 80-97; it reads SQKKGDRIGKAIKDRDGK.

Belongs to the UPF0229 family.

The sequence is that of UPF0229 protein CKR_0568 from Clostridium kluyveri (strain NBRC 12016).